The chain runs to 281 residues: Transcription factor E2F6 (281 aa).

Lysine 9 participates in a covalent cross-link: Glycyl lysine isopeptide (Lys-Gly) (interchain with G-Cter in SUMO2). The DNA-binding element occupies 50–129 (YVSMRKALKV…SKNHIRWIGS (80 aa)). Positions 95-129 (KLGVRKRRVYDITNVLDGIDLVEKKSKNHIRWIGS) match the DEF box motif. The tract at residues 130–222 (DLSNFGAVPQ…PAPREDSITV (93 aa)) is dimerization. Positions 143 to 164 (LQEELSDLSAMEDALDELIKDC) are leucine-zipper. The segment at 173 to 281 (DDKENERLAY…QSEELLEVSN (109 aa)) is transcription repression. The disordered stretch occupies residues 241 to 281 (GQTSNKRSEGVGTSSSESTHPEGPEEEENPQQSEELLEVSN).

This sequence belongs to the E2F/DP family. In terms of assembly, forms heterodimers with DP family members TFDP1 or TFDP2. Component of the DRTF1/E2F transcription factor complex. Part of the E2F6.com-1 complex in G0 phase composed of E2F6, MGA, MAX, TFDP1, CBX3, BAT8, EUHMTASE1, RING1, RNF2, MBLR, L3MBTL2 and YAF2. Component of some MLL1/MLL complex, at least composed of the core components KMT2A/MLL1, ASH2L, HCFC1/HCF1, WDR5 and RBBP5, as well as the facultative components BACC1, CHD8, E2F6, HSP70, INO80C, KANSL1, LAS1L, MAX, MCRS1, MGA, KAT8/MOF, PELP1, PHF20, PRP31, RING2, RUVB1/TIP49A, RUVB2/TIP49B, SENP3, TAF1, TAF4, TAF6, TAF7, TAF9 and TEX10. As to expression, expressed in all tissues examined. Highest levels in placenta, skeletal muscle, heart, ovary, kidney, small intestine and spleen.

The protein resides in the nucleus. Functionally, inhibitor of E2F-dependent transcription. Binds DNA cooperatively with DP proteins through the E2 recognition site, 5'-TTTC[CG]CGC-3'. Has a preference for the 5'-TTTCCCGC-3' E2F recognition site. E2F6 lacks the transcriptional activation and pocket protein binding domains. Appears to regulate a subset of E2F-dependent genes whose products are required for entry into the cell cycle but not for normal cell cycle progression. Represses expression of some meiosis-specific genes, including SLC25A31/ANT4. May silence expression via the recruitment of a chromatin remodeling complex containing histone H3-K9 methyltransferase activity. Overexpression delays the exit of cells from the S-phase. The sequence is that of Transcription factor E2F6 from Homo sapiens (Human).